We begin with the raw amino-acid sequence, 72 residues long: Penaeidin-2d (72 aa).

An N-terminal signal peptide occupies residues 1–21; it reads MRLVVCLVFLASFALVCQGGA. At Gln22 the chain carries Pyrrolidone carboxylic acid. 3 cysteine pairs are disulfide-bonded: Cys45–Cys59, Cys48–Cys66, and Cys60–Cys67. Lys71 carries the lysine amide modification.

Belongs to the penaeidin family.

The protein localises to the cytoplasmic granule. Functionally, antibacterial and antifungal activity. Presents chitin-binding activity. The chain is Penaeidin-2d from Penaeus setiferus (Atlantic white shrimp).